The chain runs to 214 residues: 3-isopropylmalate dehydratase small subunit (214 aa).

The protein belongs to the LeuD family. LeuD type 1 subfamily. As to quaternary structure, heterodimer of LeuC and LeuD.

It carries out the reaction (2R,3S)-3-isopropylmalate = (2S)-2-isopropylmalate. Its pathway is amino-acid biosynthesis; L-leucine biosynthesis; L-leucine from 3-methyl-2-oxobutanoate: step 2/4. In terms of biological role, catalyzes the isomerization between 2-isopropylmalate and 3-isopropylmalate, via the formation of 2-isopropylmaleate. The sequence is that of 3-isopropylmalate dehydratase small subunit from Pseudomonas fluorescens (strain ATCC BAA-477 / NRRL B-23932 / Pf-5).